A 357-amino-acid chain; its full sequence is GTPase Obg (357 aa).

Residues 1-159 form the Obg domain; the sequence is MKFVDEAEIQ…RTLKLELKLL (159 aa). An OBG-type G domain is found at 160–343; it reads ADIGMLGFPN…IMKSAMTLFE (184 aa). GTP is bound by residues 166-173, 191-195, 213-216, 293-296, and 324-326; these read GFPNVGKS, FTTLY, DVPG, NKAD, and SAV. Residues Ser-173 and Thr-193 each coordinate Mg(2+).

Belongs to the TRAFAC class OBG-HflX-like GTPase superfamily. OBG GTPase family. As to quaternary structure, monomer. The cofactor is Mg(2+).

It localises to the cytoplasm. Functionally, an essential GTPase which binds GTP, GDP and possibly (p)ppGpp with moderate affinity, with high nucleotide exchange rates and a fairly low GTP hydrolysis rate. Plays a role in control of the cell cycle, stress response, ribosome biogenesis and in those bacteria that undergo differentiation, in morphogenesis control. The protein is GTPase Obg of Xylella fastidiosa (strain 9a5c).